The primary structure comprises 534 residues: Ankyrin repeat domain-containing protein 34C (534 aa).

4 ANK repeats span residues 10–39 (TDGN…YINE), 43–80 (KGET…DPNI), 84–114 (SGKT…DPSL), and 118–147 (TGAS…AKGK). The interval 159–205 (SGTKTTKQYLNVPPSPKVEDRQSPPLCTTPSDVELKTSGLASPPSEK) is disordered. Serine 301 carries the post-translational modification Phosphoserine. 2 disordered regions span residues 332-368 (YEKG…LKDP) and 384-403 (QPVG…GPLD). Residue serine 446 is modified to Phosphoserine. Residues 480–503 (SKPASPLASGLKSMAPVAPNSPKR) form a disordered region.

This sequence belongs to the ANKRD34 family.

The sequence is that of Ankyrin repeat domain-containing protein 34C (Ankrd34c) from Mus musculus (Mouse).